The following is a 177-amino-acid chain: MVKEIARKIEIPEGISVSFSQDDVFTATGPLGTVERKLWYPGIKIYVRDGEVEVDAESSRKEQKAMVGTFTSHIKNLMKGVNEGFECKMTILYAHFPMQVKVDGKTLIIGNFLGEKKPRIAKILGETKVKVSGNEVTVSGINKEDVGQTAANIEQKTKIKRFDPRIFQDGIYIVQKP.

This sequence belongs to the universal ribosomal protein uL6 family. As to quaternary structure, part of the 50S ribosomal subunit.

Its function is as follows. This protein binds to the 23S rRNA, and is important in its secondary structure. It is located near the subunit interface in the base of the L7/L12 stalk, and near the tRNA binding site of the peptidyltransferase center. This is Large ribosomal subunit protein uL6 from Methanosarcina barkeri (strain Fusaro / DSM 804).